We begin with the raw amino-acid sequence, 833 residues long: Scavenger receptor class F member 2 (833 aa).

Positions 1–33 (MEGAGSRGAGPARRQGARGLGLLLLLWLLPGLA) are cleaved as a signal peptide. The Extracellular segment spans residues 34-433 (APQDLNPRGR…ACHLETNQRK (400 aa)). 6 consecutive EGF-like domains span residues 63 to 102 (LGDE…ANCD), 114 to 145 (CKER…ARCE), 140 to 174 (WGAR…AQCA), 175 to 204 (SACY…RSCN), 205 to 233 (NQCA…ARCD), and 228 to 262 (FGAR…KYCR). Intrachain disulfides connect Cys67–Cys78, Cys72–Cys90, Cys92–Cys101, Cys118–Cys126, Cys120–Cys133, Cys135–Cys144, Cys148–Cys155, Cys150–Cys162, Cys164–Cys173, Cys177–Cys185, Cys179–Cys192, Cys194–Cys203, Cys207–Cys214, Cys209–Cys221, Cys223–Cys232, Cys236–Cys243, Cys238–Cys250, and Cys252–Cys261. The N-linked (GlcNAc...) asparagine glycan is linked to Asn75. 2 N-linked (GlcNAc...) asparagine glycosylation sites follow: Asn302 and Asn357. Positions 364-395 (CAFVCSDCGSGHCDFQSGRCLCSPGVHGPHCN) constitute an EGF-like 7 domain. 3 disulfides stabilise this stretch: Cys368/Cys376, Cys371/Cys383, and Cys385/Cys394. Asn395 is a glycosylation site (N-linked (GlcNAc...) asparagine). A helical transmembrane segment spans residues 434-454 (GVMGAGALLTLLLGLLLSLLG). Residues 455–833 (CCCACRGKDS…SRAGTAPGAS (379 aa)) are Cytoplasmic-facing. Residues Ser538 and Ser600 each carry the phosphoserine modification. Residues 578–833 (SLEPTGTSTP…SRAGTAPGAS (256 aa)) form a disordered region. At Tyr615 the chain carries Phosphotyrosine. Residues 619 to 630 (ARREARPARTRN) show a composition bias toward basic and acidic residues. Residues Ser638, Ser640, and Ser695 each carry the phosphoserine modification. A Phosphothreonine modification is found at Thr712. The segment covering 748–761 (ELRDKTRSLGRAEK) has biased composition (basic and acidic residues). The segment covering 781 to 798 (ASASEASGSEKAAASAPA) has biased composition (low complexity). Basic residues predominate over residues 804–816 (KKTPIQKPPRKKS).

Homophilic and heterophilic interaction via its extracellular domain. Interacts with SCARF1. The heterophilic interaction with SCARF1, which is stronger than the homophilic interaction with itself, is suppressed by the presence of SCARF1 ligand such as Ac-LDL.

The protein localises to the membrane. In terms of biological role, probable adhesion protein, which mediates homophilic and heterophilic interactions. In contrast to SCARF1, it poorly mediates the binding and degradation of acetylated low density lipoprotein (Ac-LDL). The protein is Scavenger receptor class F member 2 (Scarf2) of Mus musculus (Mouse).